The sequence spans 124 residues: MGCCQDKDFEMSDEQSKEEESEDGREDETTDTQRGPRECERGLPEGRGELRGLVVPSGAEDIDLNSPDHPNHKSNESLLITVLWRRLSTFGRRGSSRPSKRQPDQIRKQESPIREGNQEEPEKG.

Positions 1–10 (MGCCQDKDFE) are enriched in basic and acidic residues. 2 disordered regions span residues 1 to 77 (MGCC…SNES) and 90 to 124 (FGRR…PEKG). Acidic residues predominate over residues 11–30 (MSDEQSKEEESEDGREDETT). Basic and acidic residues-rich tracts occupy residues 34–50 (RGPR…RGEL) and 101–124 (RQPD…PEKG).

In terms of tissue distribution, expressed in Testis.

This chain is Testis-expressed protein 54, found in Homo sapiens (Human).